The sequence spans 153 residues: Natriuretic peptides A (153 aa).

The N-terminal stretch at 1–25 (MGSFSTIMASFLLFLAFQLQGQTRA) is a signal peptide. 2 consecutive propeptides follow at residues 26–123 (NPVY…AAPR) and 93–103 (DGGALGRGSWD). The segment at 54–105 (EDEVMPPQVLSDQSEEERAALSPLPEVPPWTGEVNPAQRDGGALGRGSWDSS) is disordered. A Phosphoserine modification is found at serine 129. Cysteines 130 and 146 form a disulfide. Positions 147 to 151 (NSFRY) are important for degradation of atrial natriuretic peptide by IDE.

Belongs to the natriuretic peptide family. Homodimer; disulfide-linked antiparallel dimer. Post-translationally, the precursor molecule is proteolytically cleaved by CORIN at Arg-123 to produce the atrial natriuretic peptide. Undergoes further proteolytic cleavage by unknown proteases to give rise to long-acting natriuretic peptide, vessel dilator and kaliuretic peptide. Additional processing gives rise to the auriculin and atriopeptin peptides. In the kidneys, alternative processing by an unknown protease results in the peptide urodilatin. Cleavage by MME initiates degradation of the factor and thereby regulates its activity. Degradation by IDE results in reduced activation of NPR1 (in vitro). During IDE degradation, the resulting products can temporarily stimulate NPR2 to produce cGMP, before the fragments are completely degraded and inactivated by IDE (in vitro). In terms of processing, degraded by IDE. Post-translationally, phosphorylation on Ser-129 decreases vasorelaxant activity.

It localises to the secreted. Its subcellular location is the perikaryon. It is found in the cell projection. Hormone that plays a key role in mediating cardio-renal homeostasis, and is involved in vascular remodeling and regulating energy metabolism. Acts by specifically binding and stimulating NPR1 to produce cGMP, which in turn activates effector proteins, such as PRKG1, that drive various biological responses. Regulates vasodilation, natriuresis, diuresis and aldosterone synthesis and is therefore essential for regulating blood pressure, controlling the extracellular fluid volume and maintaining the fluid-electrolyte balance. Also involved in inhibiting cardiac remodeling and cardiac hypertrophy by inducing cardiomyocyte apoptosis and attenuating the growth of cardiomyocytes and fibroblasts. Plays a role in female pregnancy by promoting trophoblast invasion and spiral artery remodeling in uterus, and thus prevents pregnancy-induced hypertension. In adipose tissue, acts in various cGMP- and PKG-dependent pathways to regulate lipid metabolism and energy homeostasis. This includes up-regulating lipid metabolism and mitochondrial oxygen utilization by activating the AMP-activated protein kinase (AMPK), and increasing energy expenditure by acting via MAPK11 to promote the UCP1-dependent thermogenesis of brown adipose tissue. Binds the clearance receptor NPR3 which removes the hormone from circulation. Functionally, may have a role in cardio-renal homeostasis through regulation of natriuresis, diuresis, vasodilation, and inhibiting aldosterone synthesis. In vitro, promotes the production of cGMP and induces vasodilation. May promote natriuresis, at least in part, by enhancing prostaglandin E2 synthesis resulting in the inhibition of renal Na+-K+-ATPase. However reports on the involvement of this peptide in mammal blood volume and blood pressure homeostasis are conflicting; according to a report, in vivo it is not sufficient to activate cGMP and does not inhibit collecting duct transport nor effect diuresis and natriuresis. Appears to bind to specific receptors that are distinct from the receptors bound by atrial natriuretic peptide and vessel dilator. Possibly enhances protein excretion in urine by decreasing proximal tubular protein reabsorption. Its function is as follows. May have a role in cardio-renal homeostasis through regulation of natriuresis, diuresis, and vasodilation. In vitro, promotes the production of cGMP and induces vasodilation. May promote natriuresis, at least in part, by enhancing prostaglandin E2 synthesis resulting in the inhibition of renal Na+-K+-ATPase. However reports on the involvement of this peptide in mammal blood volume and blood pressure homeostasis are conflicting; according to a report it is not sufficient to activate cGMP and does not inhibit collecting duct transport nor effect diuresis and natriuresis. Appears to bind to specific receptors that are distinct from the receptors bound by the atrial natriuretic and long-acting natriuretic peptides. Possibly functions in protein excretion in urine by maintaining the integrity of the proximal tubules and enhancing protein excretion by decreasing proximal tubular protein reabsorption. In terms of biological role, may have a role in cardio-renal homeostasis through regulation of diuresis and inhibiting aldosterone synthesis. In vitro, promotes the production of cGMP and induces vasodilation. May promote natriuresis, at least in part, by enhancing prostaglandin E2 synthesis resulting in the inhibition of renal Na+-K+-ATPase. May have a role in potassium excretion but not sodium excretion (natriuresis). Possibly enhances protein excretion in urine by decreasing proximal tubular protein reabsorption. Hormone produced in the kidneys that appears to be important for maintaining cardio-renal homeostasis. Mediates vasodilation, natriuresis and diuresis primarily in the renal system, in order to maintain the extracellular fluid volume and control the fluid-electrolyte balance. Specifically binds and stimulates cGMP production by renal transmembrane receptors, likely NPR1. Urodilatin not ANP, may be the natriuretic peptide responsible for the regulation of sodium and water homeostasis in the kidney. Functionally, may have a role in cardio-renal homeostasis through regulation of natriuresis and vasodilation. In vivo promotes natriuresis and in vitro, vasodilates renal artery strips. Its function is as follows. May have a role in cardio-renal homeostasis through regulation of regulation of natriuresis and vasodilation. In vivo promotes natriuresis. In vitro, vasodilates intestinal smooth muscle but not smooth muscle strips. In terms of biological role, may have a role in cardio-renal homeostasis through regulation of natriuresis and vasodilation. In vivo promotes natriuresis. In vitro, selectively vasodilates intestinal and vascular smooth muscle strips. May have a role in cardio-renal homeostasis through regulation of natriuresis and vasodilation. In vivo promotes natriuresis. In vitro, selectively vasodilates intestinal smooth muscle but not vascular smooth muscle strips. The polypeptide is Natriuretic peptides A (NPPA) (Equus caballus (Horse)).